A 311-amino-acid chain; its full sequence is Metal-staphylopine import system permease protein CntB (311 aa).

6 helical membrane-spanning segments follow: residues 9–29 (IALMFPLMIVVSFMTFLLTYI), 105–125 (LTIISSVMVMITSIILGVVSA), 139–159 (VAFFLTALPSYWIASILIIYV), 173–193 (GPESYILPVIVITIAYAGIYF), 237–257 (IFCMSIPMIMGGLVVIEYIFA), and 274–294 (FPVIQAYVLIVAVLFIVFNTL). In terms of domain architecture, ABC transmembrane type-1 spans 99–295 (FMNTLKLTII…VLFIVFNTLA (197 aa)).

Belongs to the binding-protein-dependent transport system permease family. In terms of assembly, the complex is composed of two ATP-binding proteins (CntD and CntF), two transmembrane proteins (CntB and CntC) and a solute-binding protein (CntA).

The protein resides in the cell membrane. With respect to regulation, nickel/cobalt import is reduced in the presence of zinc. In terms of biological role, part of the ABC transporter complex CntABCDF (Opp1) involved in the uptake of metal in complex with the metallophore staphylopine (StP). Involved in the import of divalent metals ions such as nickel, cobalt and zinc. Probably responsible for the translocation of the substrate across the membrane. Plays a major role in nickel/cobalt import in zinc-depleted conditions. Contributes to virulence. Required for full urease activity in vitro. The sequence is that of Metal-staphylopine import system permease protein CntB from Staphylococcus aureus (strain NCTC 8325 / PS 47).